Reading from the N-terminus, the 396-residue chain is Acetate kinase (396 aa).

N8 is a Mg(2+) binding site. K15 lines the ATP pocket. R89 serves as a coordination point for substrate. Residue D146 is the Proton donor/acceptor of the active site. Residues 206–210, 283–285, and 331–335 each bind ATP; these read HIGNG, DMR, and GMGEN. Position 383 (E383) interacts with Mg(2+).

The protein belongs to the acetokinase family. Homodimer. Mg(2+) is required as a cofactor. It depends on Mn(2+) as a cofactor.

The protein localises to the cytoplasm. It carries out the reaction acetate + ATP = acetyl phosphate + ADP. Its pathway is metabolic intermediate biosynthesis; acetyl-CoA biosynthesis; acetyl-CoA from acetate: step 1/2. Functionally, catalyzes the formation of acetyl phosphate from acetate and ATP. Can also catalyze the reverse reaction. The polypeptide is Acetate kinase (Streptococcus uberis (strain ATCC BAA-854 / 0140J)).